Reading from the N-terminus, the 94-residue chain is Small ribosomal subunit protein uS19 (94 aa).

The tract at residues 73–94 (EFSPTRRFGGHADKKSKKGQVK) is disordered.

Belongs to the universal ribosomal protein uS19 family.

Its function is as follows. Protein S19 forms a complex with S13 that binds strongly to the 16S ribosomal RNA. This Kosmotoga olearia (strain ATCC BAA-1733 / DSM 21960 / TBF 19.5.1) protein is Small ribosomal subunit protein uS19.